Here is a 490-residue protein sequence, read N- to C-terminus: Homoserine O-acetyltransferase (490 aa).

The AB hydrolase-1 domain occupies 48-354 (NVILVCHALT…NSEYGHDAFL (307 aa)). S153 acts as the Nucleophile in catalysis. Residue R223 coordinates substrate. Catalysis depends on residues D317 and H350. Residue D351 participates in substrate binding. 2 CBS domains span residues 377-434 (MSHT…ANSI) and 438-490 (MTKN…LYEK).

Belongs to the AB hydrolase superfamily. MetX family. In terms of assembly, homodimer.

It is found in the cytoplasm. It carries out the reaction L-homoserine + acetyl-CoA = O-acetyl-L-homoserine + CoA. Its pathway is amino-acid biosynthesis; L-methionine biosynthesis via de novo pathway; O-acetyl-L-homoserine from L-homoserine: step 1/1. Transfers an acetyl group from acetyl-CoA to L-homoserine, forming acetyl-L-homoserine. The sequence is that of Homoserine O-acetyltransferase from Methanosphaera stadtmanae (strain ATCC 43021 / DSM 3091 / JCM 11832 / MCB-3).